The primary structure comprises 258 residues: Lysine-rich coiled-coil protein 1 (258 aa).

Residues 142–258 (DNSTSTHQAS…MLWDQSILGF (117 aa)) form a disordered region. Residues 150-161 (ASHKQIHQKRKR) are compositionally biased toward basic residues. 3 stretches are compositionally biased toward basic and acidic residues: residues 162-175 (HPEE…EEWS), 183-213 (CKEI…TEKL), and 220-232 (KGRD…EERK). Residues 211–248 (EKLKNRKEKKGRDVVSKKEERKRTKKKKEQGQERTEEE) adopt a coiled-coil conformation.

The protein is Lysine-rich coiled-coil protein 1 (KRCC1) of Pongo abelii (Sumatran orangutan).